The chain runs to 224 residues: Metalloproteinase inhibitor 4 (224 aa).

Positions 1–29 (MPWSPLAALSWALVLRLLALLWPPGRGEA) are cleaved as a signal peptide. Position 30 (Cys30) interacts with Zn(2+). 2 involved in metalloproteinase-binding regions span residues 30 to 33 (CSCA) and 99 to 100 (SS). 6 disulfide bridges follow: Cys30–Cys102, Cys32–Cys131, Cys42–Cys156, Cys158–Cys205, Cys163–Cys168, and Cys176–Cys197. An NTR domain is found at 30 to 156 (CSCAPAHPQQ…SLNHHYHQNC (127 aa)).

This sequence belongs to the protease inhibitor I35 (TIMP) family. As to expression, expressed in brain, heart, ovary and skeletal muscle.

It is found in the secreted. Its function is as follows. Complexes with metalloproteinases (such as collagenases) and irreversibly inactivates them by binding to their catalytic zinc cofactor. The polypeptide is Metalloproteinase inhibitor 4 (Timp4) (Mus musculus (Mouse)).